A 218-amino-acid polypeptide reads, in one-letter code: uncharacterized protein (218 aa).

5 consecutive transmembrane segments (helical) span residues 27–49 (IALE…GFLA), 57–77 (GGVL…GYWV), 115–135 (VFFG…AGIV), 142–162 (FLLY…SLAY), and 180–200 (FSWF…VFHF).

The protein belongs to the DedA family.

The protein resides in the cell membrane. This is an uncharacterized protein from Synechocystis sp. (strain ATCC 27184 / PCC 6803 / Kazusa).